The primary structure comprises 144 residues: Large ribosomal subunit protein uL15 (144 aa).

Over residues 1–10 (MYLNTISPSR) the composition is skewed to polar residues. The interval 1 to 51 (MYLNTISPSRGSKHLSKRVGRGIGSGLGKTGGRGHKGQKSRSGGKVRLGFE) is disordered. The span at 11-20 (GSKHLSKRVG) shows a compositional bias: basic residues. The span at 21–31 (RGIGSGLGKTG) shows a compositional bias: gly residues. Positions 32-44 (GRGHKGQKSRSGG) are enriched in basic residues.

It belongs to the universal ribosomal protein uL15 family. In terms of assembly, part of the 50S ribosomal subunit.

In terms of biological role, binds to the 23S rRNA. This chain is Large ribosomal subunit protein uL15, found in Blochmanniella pennsylvanica (strain BPEN).